The following is a 782-amino-acid chain: Endonuclease MutS2 (782 aa).

336-343 (GPNTGGKT) serves as a coordination point for ATP. The 76-residue stretch at 707–782 (LDLRGYRYED…GFGVTVATLK (76 aa)) folds into the Smr domain.

This sequence belongs to the DNA mismatch repair MutS family. MutS2 subfamily. Homodimer. Binds to stalled ribosomes, contacting rRNA.

Functionally, endonuclease that is involved in the suppression of homologous recombination and thus may have a key role in the control of bacterial genetic diversity. In terms of biological role, acts as a ribosome collision sensor, splitting the ribosome into its 2 subunits. Detects stalled/collided 70S ribosomes which it binds and splits by an ATP-hydrolysis driven conformational change. Acts upstream of the ribosome quality control system (RQC), a ribosome-associated complex that mediates the extraction of incompletely synthesized nascent chains from stalled ribosomes and their subsequent degradation. Probably generates substrates for RQC. The protein is Endonuclease MutS2 of Staphylococcus aureus (strain Mu50 / ATCC 700699).